Reading from the N-terminus, the 484-residue chain is Suppressor of fused homolog (484 aa).

The interval 1–24 is disordered; sequence MAELRPSGAPGPTAPPAPGPTAPP. Residues 12-23 are compositionally biased toward pro residues; the sequence is PTAPPAPGPTAP. A Glycyl lysine isopeptide (Lys-Gly) (interchain with G-Cter in ubiquitin) cross-link involves residue K257. The segment at 279 to 360 is disordered; sequence SRPPEDDEDS…SSTAIIPHEL (82 aa). At S301 the chain carries Phosphoserine. Position 303 is an N6-acetyllysine (K303). K321 participates in a covalent cross-link: Glycyl lysine isopeptide (Lys-Gly) (interchain with G-Cter in SUMO2). Residues 336–347 are compositionally biased toward basic and acidic residues; the sequence is AHDRAPSRKDSL. A phosphoserine mark is found at S342, S346, and S352. T353 is modified (phosphothreonine). At S481 the chain carries Phosphoserine.

This sequence belongs to the SUFU family. May form homodimers. Part of a DNA-bound corepressor complex containing SAP18, GLI1 and SIN3. Part of a complex containing CTNNB1. Binds BTRC, GLI2, GLI3, SAP18 and STK36. Binds both free and DNA-bound GLI1. Interacts with KIF7. Interacts with GLI3FL and this interaction regulates the formation of either repressor or activator forms of GLI3. Its association with GLI3FL is regulated by Hh signaling and dissociation of the SUFU-GLI3 interaction requires the presence of the ciliary motor KIF3A. Interacts with ULK3; inactivating the protein kinase activity of ULK3. Interacts with RAB23. Polyubiquitinated at Lys-257 by the SCF(FBXL17) complex, leading to its subsequent degradation and allowing the release of GLI1 for proper hedgehog/smoothened signal transduction. Ubiquitination is impaired by phosphorylation at Ser-342, Ser-346, Ser-352 and Thr-353. Post-translationally, phosphorylation at Ser-342, Ser-346, Ser-352 and Thr-353 prevents ubiquitination by the SCF(FBXL17) complex. Ubiquitous in adult tissues. Detected in osteoblasts of the perichondrium in the developing limb of 12-week old embryos. Isoform 1 is detected in fetal brain, lung, kidney and testis. Isoform 2 is detected in fetal testis, and at much lower levels in fetal brain, lung and kidney.

It localises to the cytoplasm. It is found in the nucleus. Its function is as follows. Negative regulator in the hedgehog/smoothened signaling pathway. Down-regulates GLI1-mediated transactivation of target genes. Down-regulates GLI2-mediated transactivation of target genes. Part of a corepressor complex that acts on DNA-bound GLI1. May also act by linking GLI1 to BTRC and thereby targeting GLI1 to degradation by the proteasome. Sequesters GLI1, GLI2 and GLI3 in the cytoplasm, this effect is overcome by binding of STK36 to both SUFU and a GLI protein. Negative regulator of beta-catenin signaling. Regulates the formation of either the repressor form (GLI3R) or the activator form (GLI3A) of the full-length form of GLI3 (GLI3FL). GLI3FL is complexed with SUFU in the cytoplasm and is maintained in a neutral state. Without the Hh signal, the SUFU-GLI3 complex is recruited to cilia, leading to the efficient processing of GLI3FL into GLI3R. When Hh signaling is initiated, SUFU dissociates from GLI3FL and the latter translocates to the nucleus, where it is phosphorylated, destabilized, and converted to a transcriptional activator (GLI3A). Required for normal embryonic development. Required for the proper formation of hair follicles and the control of epidermal differentiation. This Homo sapiens (Human) protein is Suppressor of fused homolog.